Reading from the N-terminus, the 190-residue chain is Guanylate kinase (190 aa).

The Guanylate kinase-like domain maps to 8-188 (GRLVILAGPS…AVKAIEDVLL (181 aa)). Position 15–22 (15–22 (GPSAVGKS)) interacts with ATP.

It belongs to the guanylate kinase family.

The protein resides in the cytoplasm. It carries out the reaction GMP + ATP = GDP + ADP. In terms of biological role, essential for recycling GMP and indirectly, cGMP. This Corynebacterium glutamicum (strain ATCC 13032 / DSM 20300 / JCM 1318 / BCRC 11384 / CCUG 27702 / LMG 3730 / NBRC 12168 / NCIMB 10025 / NRRL B-2784 / 534) protein is Guanylate kinase.